Reading from the N-terminus, the 177-residue chain is Small ribosomal subunit protein mS23 (177 aa).

Ala2 carries the N-acetylalanine modification. Lys83 bears the N6-succinyllysine mark. N6-acetyllysine is present on Lys102. The interval 145 to 177 (LQASSEGHEPQEDDDLAQRGQVKQEPETAPSPP) is disordered.

This sequence belongs to the mitochondrion-specific ribosomal protein mS23 family. Component of the mitochondrial ribosome small subunit (28S) which comprises a 12S rRNA and about 30 distinct proteins.

The protein localises to the mitochondrion. The protein is Small ribosomal subunit protein mS23 of Mus musculus (Mouse).